We begin with the raw amino-acid sequence, 214 residues long: Adenylate kinase (214 aa).

10–15 (GAGKGT) contacts ATP. An NMP region spans residues 30-59 (STGDMFRDHKARGTELGKTVQAIMDAGGLV). Residues threonine 31, arginine 36, 57 to 59 (GLV), 85 to 88 (GYPR), and glutamine 92 each bind AMP. Residues 126–163 (GRRSCPKCGAVYHVSANPPRRMGYCDRDDAGLVQRDDD) form an LID region. Arginine 127 is an ATP binding site. The Zn(2+) site is built by cysteine 130 and cysteine 133. ATP is bound at residue 136–137 (VY). 2 residues coordinate Zn(2+): cysteine 150 and aspartate 153. Arginine 160 and arginine 171 together coordinate AMP. Residue glycine 199 coordinates ATP.

This sequence belongs to the adenylate kinase family. In terms of assembly, monomer.

It localises to the cytoplasm. The enzyme catalyses AMP + ATP = 2 ADP. Its pathway is purine metabolism; AMP biosynthesis via salvage pathway; AMP from ADP: step 1/1. Its function is as follows. Catalyzes the reversible transfer of the terminal phosphate group between ATP and AMP. Plays an important role in cellular energy homeostasis and in adenine nucleotide metabolism. This is Adenylate kinase from Anaeromyxobacter sp. (strain Fw109-5).